Consider the following 155-residue polypeptide: 3-hydroxyacyl-[acyl-carrier-protein] dehydratase FabZ (155 aa).

Residue His-61 is part of the active site.

It belongs to the thioester dehydratase family. FabZ subfamily.

It is found in the cytoplasm. The enzyme catalyses a (3R)-hydroxyacyl-[ACP] = a (2E)-enoyl-[ACP] + H2O. Functionally, involved in unsaturated fatty acids biosynthesis. Catalyzes the dehydration of short chain beta-hydroxyacyl-ACPs and long chain saturated and unsaturated beta-hydroxyacyl-ACPs. This is 3-hydroxyacyl-[acyl-carrier-protein] dehydratase FabZ from Synechococcus sp. (strain ATCC 27144 / PCC 6301 / SAUG 1402/1) (Anacystis nidulans).